Reading from the N-terminus, the 155-residue chain is Ribosome maturation factor RimP (155 aa).

Belongs to the RimP family.

Its subcellular location is the cytoplasm. In terms of biological role, required for maturation of 30S ribosomal subunits. The chain is Ribosome maturation factor RimP from Prochlorococcus marinus (strain AS9601).